The primary structure comprises 373 residues: Alcohol dehydrogenase class-3 (373 aa).

Alanine 1 bears the N-acetylalanine mark. Residues cysteine 44, histidine 66, cysteine 96, cysteine 99, cysteine 102, cysteine 110, and cysteine 173 each coordinate Zn(2+).

This sequence belongs to the zinc-containing alcohol dehydrogenase family. Class-III subfamily. As to quaternary structure, homodimer. Zn(2+) serves as cofactor.

The protein localises to the cytoplasm. The enzyme catalyses a primary alcohol + NAD(+) = an aldehyde + NADH + H(+). It carries out the reaction a secondary alcohol + NAD(+) = a ketone + NADH + H(+). It catalyses the reaction S-(hydroxymethyl)glutathione + NADP(+) = S-formylglutathione + NADPH + H(+). The catalysed reaction is S-(hydroxymethyl)glutathione + NAD(+) = S-formylglutathione + NADH + H(+). The enzyme catalyses S-nitrosoglutathione + NADH + H(+) = S-(hydroxysulfenamide)glutathione + NAD(+). In terms of biological role, class-III ADH is remarkably ineffective in oxidizing ethanol, but it readily catalyzes the oxidation of long-chain primary alcohols and the oxidation of S-(hydroxymethyl) glutathione. Also acts as a S-nitroso-glutathione reductase by catalyzing the NADH-dependent reduction of S-nitrosoglutathione, thereby regulating protein S-nitrosylation. In Saara hardwickii (Indian spiny-tailed lizard), this protein is Alcohol dehydrogenase class-3.